A 731-amino-acid polypeptide reads, in one-letter code: MSRTDQLAGTHLAPEPNDLALLVAGSHHNPHGVLGAHEYGDHIVIRAFRPHAAEVIAIVGDDRFPMQHIESGLFAVALPFVDLIDYRLQVSYENSEPFTVADAYRFLPTLGEVDLHLFAEGRHERLWEALGAHPRSFTTADGVVHGVSFAVWAPNAEGVSLIGDFNGWSGSEAPMRVLGSSGVWELFWPDFPADGLYKFRVHGADGVVSERADPFAFGTEVPPQTASRVTVSDYSWGDGDWMTERAQRNPVFEPMSTYEVHLGSWRPGLSYRQLATELTDYVVAHKFTHVELLPVAEHPFAGSWGYQVTSYYAPTSRFGTPDDFRALVDALHQAGIGVIVDWVPAHFPKDAWALGRFDGTPLYEHSDPKRGEQLDWGTYVFDFGRPEVRNFLVANALYWIEQFHIDGLRVDAVASMLYLDYSRPQDGWTPNIYEGRENLEAVQFLQEMNATAHKAAPGIVTIAEESTSWPGVTRPTSIGGLGFSMKWNMGWMHDTLDYVSRDPIYRSYHHHEMTFSMLYAFSENYVLPLSHDEVVHGKGTLWGRMPGSNHTKAAGLRSLLAYQWAHPGKQLLFMGQEFGQRAEWSEQRGLDWFQLDENGFSNGVLRLVRDINEIYCDHCALWSQDTTPEGYSWIDANDSANNVLSFLRHGSDGSVMACIFNFAGSEHSDYRLGLPIAGRWREVLNTDATIYNGSGVGNFGGVDATAEPWHGRPASAVLVLPPSSALWLEPA.

D411 (nucleophile) is an active-site residue. The active-site Proton donor is E464.

It belongs to the glycosyl hydrolase 13 family. GlgB subfamily. Monomer.

The enzyme catalyses Transfers a segment of a (1-&gt;4)-alpha-D-glucan chain to a primary hydroxy group in a similar glucan chain.. It functions in the pathway glycan biosynthesis; glycogen biosynthesis. Functionally, catalyzes the formation of the alpha-1,6-glucosidic linkages in glycogen by scission of a 1,4-alpha-linked oligosaccharide from growing alpha-1,4-glucan chains and the subsequent attachment of the oligosaccharide to the alpha-1,6 position. The protein is 1,4-alpha-glucan branching enzyme GlgB of Mycobacterium ulcerans (strain Agy99).